We begin with the raw amino-acid sequence, 520 residues long: Cobyric acid synthase (520 aa).

The region spanning 254 to 465 is the GATase cobBQ-type domain; the sequence is ELDIAVVRLP…IHGILDNDGL (212 aa). Catalysis depends on Cys-335, which acts as the Nucleophile. His-457 is a catalytic residue.

The protein belongs to the CobB/CobQ family. CobQ subfamily.

Its pathway is cofactor biosynthesis; adenosylcobalamin biosynthesis. In terms of biological role, catalyzes amidations at positions B, D, E, and G on adenosylcobyrinic A,C-diamide. NH(2) groups are provided by glutamine, and one molecule of ATP is hydrogenolyzed for each amidation. In Sorangium cellulosum (strain So ce56) (Polyangium cellulosum (strain So ce56)), this protein is Cobyric acid synthase.